Consider the following 137-residue polypeptide: Large ribosomal subunit protein uL16c (137 aa).

The segment at 1–21 is disordered; that stretch reads MLSPKRTKFRRHHRGRMKGKA.

It belongs to the universal ribosomal protein uL16 family. In terms of assembly, part of the 50S ribosomal subunit.

The protein localises to the plastid. Its subcellular location is the chloroplast. The protein is Large ribosomal subunit protein uL16c of Tupiella akineta (Green alga).